The following is a 60-amino-acid chain: Protein translocase subunit SecE (60 aa).

Residues 31 to 51 (IIVVSTVIFFLVFFYALDIGI) traverse the membrane as a helical segment.

The protein belongs to the SecE/SEC61-gamma family. Component of the Sec protein translocase complex. Heterotrimer consisting of SecY, SecE and SecG subunits. The heterotrimers can form oligomers, although 1 heterotrimer is thought to be able to translocate proteins. Interacts with the ribosome. Interacts with SecDF, and other proteins may be involved. Interacts with SecA.

It localises to the cell membrane. Essential subunit of the Sec protein translocation channel SecYEG. Clamps together the 2 halves of SecY. May contact the channel plug during translocation. This chain is Protein translocase subunit SecE, found in Staphylococcus epidermidis (strain ATCC 35984 / DSM 28319 / BCRC 17069 / CCUG 31568 / BM 3577 / RP62A).